Consider the following 1024-residue polypeptide: Beta-galactosidase (1024 aa).

Substrate-binding residues include Asn-103 and Asp-202. Asp-202 is a Na(+) binding site. Residues Glu-417, His-419, and Glu-462 each contribute to the Mg(2+) site. Residues Glu-462 and 538–541 (EYAH) contribute to the substrate site. Residue Glu-462 is the Proton donor of the active site. Glu-538 functions as the Nucleophile in the catalytic mechanism. Asn-598 contributes to the Mg(2+) binding site. Positions 602 and 605 each coordinate Na(+). Residues Asn-605 and Trp-1000 each coordinate substrate.

Belongs to the glycosyl hydrolase 2 family. In terms of assembly, homotetramer. Requires Mg(2+) as cofactor. The cofactor is Na(+).

The enzyme catalyses Hydrolysis of terminal non-reducing beta-D-galactose residues in beta-D-galactosides.. This chain is Beta-galactosidase, found in Escherichia coli (strain UTI89 / UPEC).